The primary structure comprises 62 residues: DNA-binding protein 7 (62 aa).

This sequence belongs to the 7 kDa DNA-binding/endoribonuclease P2 family. In terms of assembly, monomer.

The protein resides in the cytoplasm. Can constrain negative DNA supercoils. May be involved in maintaining the integrity of the genome at high temperature. The polypeptide is DNA-binding protein 7 (Metallosphaera sedula (strain ATCC 51363 / DSM 5348 / JCM 9185 / NBRC 15509 / TH2)).